Reading from the N-terminus, the 391-residue chain is Na(+)/H(+) antiporter NhaA 1 (391 aa).

Helical transmembrane passes span F19–I39, V56–L76, A98–I118, G128–G148, V157–F177, S180–L200, L208–H228, V264–I284, V297–I317, G335–F355, and E364–L384.

It belongs to the NhaA Na(+)/H(+) (TC 2.A.33) antiporter family.

The protein localises to the cell inner membrane. The enzyme catalyses Na(+)(in) + 2 H(+)(out) = Na(+)(out) + 2 H(+)(in). In terms of biological role, na(+)/H(+) antiporter that extrudes sodium in exchange for external protons. This Pseudomonas savastanoi pv. phaseolicola (strain 1448A / Race 6) (Pseudomonas syringae pv. phaseolicola (strain 1448A / Race 6)) protein is Na(+)/H(+) antiporter NhaA 1.